Here is a 121-residue protein sequence, read N- to C-terminus: Chronic lymphocytic leukemia up-regulated protein 1 (121 aa).

As to expression, specifically expressed in chronic lymphocytic leukemia (CLL) cells from patients without immunoglobulin heavy-chain hypermutations. Expression is detected in all CLL cells and levels are similar in patients before and after treatment.

The protein resides in the cytoplasm. The sequence is that of Chronic lymphocytic leukemia up-regulated protein 1 (CLLU1) from Homo sapiens (Human).